We begin with the raw amino-acid sequence, 201 residues long: Dephospho-CoA kinase (201 aa).

Residues 3–201 (IIGLTGGMAA…ALLHRLREAS (199 aa)) enclose the DPCK domain. ATP is bound at residue 11-16 (AAGKST).

The protein belongs to the CoaE family.

The protein resides in the cytoplasm. It carries out the reaction 3'-dephospho-CoA + ATP = ADP + CoA + H(+). It participates in cofactor biosynthesis; coenzyme A biosynthesis; CoA from (R)-pantothenate: step 5/5. Catalyzes the phosphorylation of the 3'-hydroxyl group of dephosphocoenzyme A to form coenzyme A. This chain is Dephospho-CoA kinase, found in Gluconobacter oxydans (strain 621H) (Gluconobacter suboxydans).